Consider the following 408-residue polypeptide: Succinylornithine transaminase (408 aa).

Position 252 is an N6-(pyridoxal phosphate)lysine (K252).

It belongs to the class-III pyridoxal-phosphate-dependent aminotransferase family. AstC subfamily. It depends on pyridoxal 5'-phosphate as a cofactor.

It catalyses the reaction N(2)-succinyl-L-ornithine + 2-oxoglutarate = N-succinyl-L-glutamate 5-semialdehyde + L-glutamate. It functions in the pathway amino-acid degradation; L-arginine degradation via AST pathway; L-glutamate and succinate from L-arginine: step 3/5. Functionally, catalyzes the transamination of N(2)-succinylornithine and alpha-ketoglutarate into N(2)-succinylglutamate semialdehyde and glutamate. Can also act as an acetylornithine aminotransferase. This chain is Succinylornithine transaminase, found in Salmonella paratyphi B (strain ATCC BAA-1250 / SPB7).